A 272-amino-acid chain; its full sequence is Shikimate dehydrogenase (NADP(+)) (272 aa).

Residues serine 14 to serine 16 and threonine 61 contribute to the shikimate site. Residue lysine 65 is the Proton acceptor of the active site. Position 77 (glutamate 77) interacts with NADP(+). Positions 86 and 102 each coordinate shikimate. Residues glycine 126 to alanine 130, asparagine 149 to arginine 154, and methionine 213 contribute to the NADP(+) site. Shikimate is bound at residue tyrosine 215. Glycine 237 is a binding site for NADP(+).

Belongs to the shikimate dehydrogenase family. In terms of assembly, homodimer.

The enzyme catalyses shikimate + NADP(+) = 3-dehydroshikimate + NADPH + H(+). Its pathway is metabolic intermediate biosynthesis; chorismate biosynthesis; chorismate from D-erythrose 4-phosphate and phosphoenolpyruvate: step 4/7. Functionally, involved in the biosynthesis of the chorismate, which leads to the biosynthesis of aromatic amino acids. Catalyzes the reversible NADPH linked reduction of 3-dehydroshikimate (DHSA) to yield shikimate (SA). The protein is Shikimate dehydrogenase (NADP(+)) of Escherichia coli O157:H7.